Consider the following 447-residue polypeptide: Signal recognition particle protein (447 aa).

Residues 108–115, 190–194, and 248–251 contribute to the GTP site; these read GLQGSGKT, DTAGR, and TKLD.

It belongs to the GTP-binding SRP family. SRP54 subfamily. Part of the signal recognition particle protein translocation system, which is composed of SRP and FtsY. Interacts with RNA.

It localises to the cytoplasm. It carries out the reaction GTP + H2O = GDP + phosphate + H(+). Involved in targeting and insertion of nascent membrane proteins into the cytoplasmic membrane. Binds to the hydrophobic signal sequence of the ribosome-nascent chain (RNC) as it emerges from the ribosomes. The SRP-RNC complex is then targeted to the cytoplasmic membrane where it interacts with the SRP receptor FtsY. This chain is Signal recognition particle protein, found in Mycoplasma mycoides.